The following is a 199-amino-acid chain: 7-methyl-GTP pyrophosphatase (199 aa).

Asp-76 serves as the catalytic Proton acceptor.

Belongs to the Maf family. YceF subfamily. It depends on a divalent metal cation as a cofactor.

It is found in the cytoplasm. It catalyses the reaction N(7)-methyl-GTP + H2O = N(7)-methyl-GMP + diphosphate + H(+). In terms of biological role, nucleoside triphosphate pyrophosphatase that hydrolyzes 7-methyl-GTP (m(7)GTP). May have a dual role in cell division arrest and in preventing the incorporation of modified nucleotides into cellular nucleic acids. The polypeptide is 7-methyl-GTP pyrophosphatase (Rhizobium meliloti (strain 1021) (Ensifer meliloti)).